The following is a 44-amino-acid chain: Alpha-amylase inhibitor WDAI-3 (44 aa).

Cysteine 20 and cysteine 41 are joined by a disulfide.

The protein belongs to the protease inhibitor I6 (cereal trypsin/alpha-amylase inhibitor) family. Homodimer. In terms of processing, the disulfide bonds are essential for the inhibitor activity. Endosperm.

Its subcellular location is the secreted. Functionally, alpha-amylase inhibitor. The sequence is that of Alpha-amylase inhibitor WDAI-3 (IHA-B1-2) from Triticum aestivum (Wheat).